A 1010-amino-acid chain; its full sequence is MAARVLVIGSGGREHTLAWKLAQSPQVKQVLVAPGNAGTACAGKISNAAVSVNDHSALAQFCKDEKIELVVVGPEAPLAAGIVGDLTSAGVRCFGPTAQAAQLESSKKFAKEFMDRHEIPTAQWRAFTNPEDACSFITSANFPALVVKASGLAAGKGVIVAKSQAEACRAVQEIMQEKSFGAAGETVVVEEFLEGEEVSCLCFTDGKTVAEMPPAQDHKRLLDGDEGPNTGGMGAYCPAPQVSKDLLVKIKNTILQRAVDGMQQEGAPYTGILYAGIMLTKDGPKVLEFNCRFGDPECQVILPLLKSDLYEVMQSTLDGLLSASLPVWLENHSAVTVVMASKGYPGAYTKGVEITGFPEAQALGLQVFHAGTALKDGKVVTSGGRVLTVTAVQENLMSALAEARKGLAALKFEGAIYRKDIGFRAVAFLQRPRGLTYKDSGVDIAAGNMLVKKIQPLAKATSRPGCSVDLGGFAGLFDLKAAGFKDPLLASGTDGVGTKLKIAQLCNKHDSIGQDLVAMCVNDILAQGAEPLFFLDYFSCGKLDLSTTEAVIAGIAAACQQAGCALLGGETAEMPNMYPPGEYDLAGFAVGAMERHQKLPQLERITEGDAVIGVASSGLHSNGFSLVRKIVERSSLQYSSPAPGGCGDQTLGDLLLTPTRIYSHSLLPIIRSGRVKAFAHITGGGLLENIPRVLPQKFGVDLDASTWRVPKVFSWLQQEGELSEEEMARTFNCGIGAALVVSKDQAEQVLHDVRRRQEEAWVIGSVVACPEDSPRVRVKNLIETIQTNGSLVANGFLKSNFPVQQKKARVAVLISGTGSNLQALIDSTRDPKSSSHIVLVISNKAAVAGLDRAERAGIPTRVINHKLYKNRVEFDNAVDHVLEEFSVDIVCLAGFMRILSGPFVRKWDGKMLNIHPSLLPSFKGSNAHEQVLEAGVTITGCTVHFVAEDVDAGQIILQEAVPVRRGDTVATLSERVKVAEHKIFPAALQLVASGAVQLREDGKIHWAKEQ.

An N-acetylalanine modification is found at Ala2. Ser10 is modified (phosphoserine). An ATP-grasp domain is found at 111 to 318 (KEFMDRHEIP…LYEVMQSTLD (208 aa)). ATP-binding positions include 190–193 (EEFL), Glu197, Arg220, and Asn229. Mg(2+) contacts are provided by Glu288 and Asn290. The residue at position 350 (Lys350) is an N6-acetyllysine. The segment at 434–809 (GLTYKDSGVD…NFPVQQKKAR (376 aa)) is AIRS domain. 2 positions are modified to phosphoserine: Ser440 and Ser467. Thr682 is subject to Phosphothreonine. Residues 810–1010 (VAVLISGTGS…DGKIHWAKEQ (201 aa)) form a GART domain region. 818-820 (GSN) serves as a coordination point for N(1)-(5-phospho-beta-D-ribosyl)glycinamide. (6R)-10-formyltetrahydrofolate is bound by residues Arg871, 896-899 (MRIL), and Asn913. His915 acts as the Proton donor in catalysis. A (6R)-10-formyltetrahydrofolate-binding site is contributed by 947–951 (AEDVD). Residue 977-980 (KVAE) participates in N(1)-(5-phospho-beta-D-ribosyl)glycinamide binding.

The protein in the N-terminal section; belongs to the GARS family. This sequence in the central section; belongs to the AIR synthase family. It in the C-terminal section; belongs to the GART family. Homodimer. The cofactor is Mg(2+). Requires Mn(2+) as cofactor. Detected in liver, kidney and brain.

It carries out the reaction 5-phospho-beta-D-ribosylamine + glycine + ATP = N(1)-(5-phospho-beta-D-ribosyl)glycinamide + ADP + phosphate + H(+). The catalysed reaction is 2-formamido-N(1)-(5-O-phospho-beta-D-ribosyl)acetamidine + ATP = 5-amino-1-(5-phospho-beta-D-ribosyl)imidazole + ADP + phosphate + H(+). It catalyses the reaction N(1)-(5-phospho-beta-D-ribosyl)glycinamide + (6R)-10-formyltetrahydrofolate = N(2)-formyl-N(1)-(5-phospho-beta-D-ribosyl)glycinamide + (6S)-5,6,7,8-tetrahydrofolate + H(+). Its pathway is purine metabolism; IMP biosynthesis via de novo pathway; 5-amino-1-(5-phospho-D-ribosyl)imidazole from N(2)-formyl-N(1)-(5-phospho-D-ribosyl)glycinamide: step 2/2. It functions in the pathway purine metabolism; IMP biosynthesis via de novo pathway; N(1)-(5-phospho-D-ribosyl)glycinamide from 5-phospho-alpha-D-ribose 1-diphosphate: step 2/2. The protein operates within purine metabolism; IMP biosynthesis via de novo pathway; N(2)-formyl-N(1)-(5-phospho-D-ribosyl)glycinamide from N(1)-(5-phospho-D-ribosyl)glycinamide (10-formyl THF route): step 1/1. Its function is as follows. Trifunctional enzyme that catalyzes three distinct reactions as part of the 'de novo' inosine monophosphate biosynthetic pathway. This Mus musculus (Mouse) protein is Trifunctional purine biosynthetic protein adenosine-3 (Gart).